Reading from the N-terminus, the 116-residue chain is Peptidyl-tRNA hydrolase (116 aa).

The protein belongs to the PTH2 family.

It localises to the cytoplasm. It catalyses the reaction an N-acyl-L-alpha-aminoacyl-tRNA + H2O = an N-acyl-L-amino acid + a tRNA + H(+). Its function is as follows. The natural substrate for this enzyme may be peptidyl-tRNAs which drop off the ribosome during protein synthesis. The chain is Peptidyl-tRNA hydrolase from Methanococcus vannielii (strain ATCC 35089 / DSM 1224 / JCM 13029 / OCM 148 / SB).